A 683-amino-acid polypeptide reads, in one-letter code: DNA ligase (683 aa).

NAD(+) is bound by residues 42–46, 91–92, and Glu-122; these read DAEYD and SL. Lys-124 acts as the N6-AMP-lysine intermediate in catalysis. NAD(+) contacts are provided by Arg-145, Glu-182, Lys-299, and Lys-323. 4 residues coordinate Zn(2+): Cys-417, Cys-420, Cys-435, and Cys-441. The region spanning 602-683 is the BRCT domain; that stretch reads APQGVLAGKT…MRKLLEGQTT (82 aa).

Belongs to the NAD-dependent DNA ligase family. LigA subfamily. Mg(2+) is required as a cofactor. Requires Mn(2+) as cofactor.

It carries out the reaction NAD(+) + (deoxyribonucleotide)n-3'-hydroxyl + 5'-phospho-(deoxyribonucleotide)m = (deoxyribonucleotide)n+m + AMP + beta-nicotinamide D-nucleotide.. DNA ligase that catalyzes the formation of phosphodiester linkages between 5'-phosphoryl and 3'-hydroxyl groups in double-stranded DNA using NAD as a coenzyme and as the energy source for the reaction. It is essential for DNA replication and repair of damaged DNA. This is DNA ligase from Paraburkholderia phymatum (strain DSM 17167 / CIP 108236 / LMG 21445 / STM815) (Burkholderia phymatum).